A 402-amino-acid polypeptide reads, in one-letter code: WAT1-related protein At5g07050 (402 aa).

Transmembrane regions (helical) follow at residues F20–L40, V48–F68, P74–I94, T109–F129, V149–F169, F196–L216, L229–V249, L266–V286, V293–V313, and I318–W338. 2 EamA domains span residues Y29–T159 and L208–L337.

It belongs to the drug/metabolite transporter (DMT) superfamily. Plant drug/metabolite exporter (P-DME) (TC 2.A.7.4) family.

The protein localises to the membrane. The protein is WAT1-related protein At5g07050 of Arabidopsis thaliana (Mouse-ear cress).